Consider the following 347-residue polypeptide: Selenide, water dikinase (347 aa).

C17 is an active-site residue. ATP contacts are provided by residues K20 and 48 to 50 (TRD). D51 lines the Mg(2+) pocket. ATP is bound by residues D68, D91, and 139 to 141 (GHS). D91 provides a ligand contact to Mg(2+). Mg(2+) is bound at residue D227.

The protein belongs to the selenophosphate synthase 1 family. Class I subfamily. As to quaternary structure, homodimer. The cofactor is Mg(2+).

It catalyses the reaction hydrogenselenide + ATP + H2O = selenophosphate + AMP + phosphate + 2 H(+). Its function is as follows. Synthesizes selenophosphate from selenide and ATP. This chain is Selenide, water dikinase, found in Salmonella typhi.